The primary structure comprises 415 residues: Gamma-glutamyl phosphate reductase (415 aa).

It belongs to the gamma-glutamyl phosphate reductase family.

It is found in the cytoplasm. It catalyses the reaction L-glutamate 5-semialdehyde + phosphate + NADP(+) = L-glutamyl 5-phosphate + NADPH + H(+). It participates in amino-acid biosynthesis; L-proline biosynthesis; L-glutamate 5-semialdehyde from L-glutamate: step 2/2. In terms of biological role, catalyzes the NADPH-dependent reduction of L-glutamate 5-phosphate into L-glutamate 5-semialdehyde and phosphate. The product spontaneously undergoes cyclization to form 1-pyrroline-5-carboxylate. The polypeptide is Gamma-glutamyl phosphate reductase (Bacillus velezensis (strain DSM 23117 / BGSC 10A6 / LMG 26770 / FZB42) (Bacillus amyloliquefaciens subsp. plantarum)).